A 598-amino-acid polypeptide reads, in one-letter code: Beta-myrcene/(E)-beta-ocimene synthase 2, chloroplastic (598 aa).

The N-terminal 30 residues, 1 to 30 (MATLCIGSAPIYQNACIHNFRLQRPRRFIS), are a transit peptide targeting the chloroplast. (2E)-geranyl diphosphate is bound by residues Arg-307, Asp-344, Asp-348, Arg-486, and Asn-489. Residues Asp-344 and Asp-348 each coordinate Mg(2+). Residues 344–348 (DDIYD) carry the DDXXD motif motif. Mg(2+) is bound by residues Asn-489, Thr-493, and Glu-497.

It belongs to the terpene synthase family. Tpsb subfamily. Requires Mg(2+) as cofactor. Mn(2+) serves as cofactor. Expressed exclusively in mature flowers, but not in inmmature buds.

The protein localises to the plastid. It localises to the chloroplast. It catalyses the reaction (2E)-geranyl diphosphate = beta-myrcene + diphosphate. It functions in the pathway secondary metabolite biosynthesis; terpenoid biosynthesis. Its function is as follows. Involved in monoterpene (C10) biosynthesis. The major products are alpha- and beta-pinene, sabinene, beta-myrcene, (E)-beta-ocimene and limonene. This chain is Beta-myrcene/(E)-beta-ocimene synthase 2, chloroplastic (TPS24), found in Arabidopsis thaliana (Mouse-ear cress).